We begin with the raw amino-acid sequence, 596 residues long: tRNA(Met) cytidine acetyltransferase TmcA (596 aa).

ATP-binding positions include glutamine 138, 160–169, and arginine 285; that span reads GRGKSTLAGK. The region spanning 328–481 is the N-acetyltransferase domain; that stretch reads SDLRRLFDAQ…SGYHSAMMLY (154 aa). Acetyl-CoA is bound by residues 406–408 and 413–419; these read IAV and QKQGIGK.

Belongs to the RNA cytidine acetyltransferase family. TmcA subfamily.

The protein resides in the cytoplasm. It catalyses the reaction cytidine(34) in elongator tRNA(Met) + acetyl-CoA + ATP + H2O = N(4)-acetylcytidine(34) in elongator tRNA(Met) + ADP + phosphate + CoA + H(+). Catalyzes the formation of N(4)-acetylcytidine (ac(4)C) at the wobble position of tRNA(Met), by using acetyl-CoA as an acetyl donor and ATP (or GTP). In Actinobacillus pleuropneumoniae serotype 5b (strain L20), this protein is tRNA(Met) cytidine acetyltransferase TmcA.